Consider the following 160-residue polypeptide: uncharacterized protein (160 aa).

This is an uncharacterized protein from Escherichia coli O157:H7.